We begin with the raw amino-acid sequence, 86 residues long: UPF0386 protein RC1_1783 (86 aa).

This sequence belongs to the UPF0386 family.

This chain is UPF0386 protein RC1_1783, found in Rhodospirillum centenum (strain ATCC 51521 / SW).